The primary structure comprises 420 residues: Glycerol-3-phosphate dehydrogenase [NAD(+)] (420 aa).

Residues 16 to 21 (GSGNWG), phenylalanine 48, and phenylalanine 119 each bind NAD(+). Residue lysine 142 participates in substrate binding. Alanine 175 lines the NAD(+) pocket. The interval 190 to 217 (YDPPPMDNSRAPTPRSNSPANGNGIAPL) is disordered. The segment covering 199 to 210 (RAPTPRSNSPAN) has biased composition (polar residues). The Proton acceptor role is filled by lysine 278. NAD(+)-binding residues include arginine 344 and glutamine 373. 344–345 (RN) contributes to the substrate binding site.

The protein belongs to the NAD-dependent glycerol-3-phosphate dehydrogenase family.

It carries out the reaction sn-glycerol 3-phosphate + NAD(+) = dihydroxyacetone phosphate + NADH + H(+). In Colletotrichum gloeosporioides (Anthracnose fungus), this protein is Glycerol-3-phosphate dehydrogenase [NAD(+)].